The chain runs to 281 residues: Undecaprenyl-diphosphatase (281 aa).

8 consecutive transmembrane segments (helical) span residues 5-25 (LFVL…FLPI), 48-68 (VKMY…LLYW), 92-112 (FWFM…LLDA), 118-138 (LMTP…MIYA), 154-174 (VTPK…IPGM), 192-212 (VVAA…YSLL), 226-246 (AELI…VAVI), and 261-281 (FAIY…MGFF).

This sequence belongs to the UppP family.

It localises to the cell membrane. It catalyses the reaction di-trans,octa-cis-undecaprenyl diphosphate + H2O = di-trans,octa-cis-undecaprenyl phosphate + phosphate + H(+). Functionally, catalyzes the dephosphorylation of undecaprenyl diphosphate (UPP). Confers resistance to bacitracin. The sequence is that of Undecaprenyl-diphosphatase from Ruminiclostridium cellulolyticum (strain ATCC 35319 / DSM 5812 / JCM 6584 / H10) (Clostridium cellulolyticum).